Here is a 382-residue protein sequence, read N- to C-terminus: MKAVHFGAGNIGRGFIGLLLNQSGYEVTFVDINDTVIEALEVKRHYEVGFAEDGVDRIVVDRVRGVNSLKEPARVVDLIAEADLVTTAVGPSLLSKVAPLISEGLRAREVEDAPVYVIACENMIGGSAILRQEVEACGGVGEANVFFPNAAVDRIVPLQQHEDPLYVEVETFHEWVIETQGLNEQPPIQGVTWVEEIGPYIERKLFTVNTGHAIASYIGSLFGKATIDEALKDRRVRQVVQGALYETGWLLLEKYGFEAKEHSQYIQKIIKRFENPKLKDEVSRVARSPIRKLGPSDRLVKPARELMDNGIEPNELAYGIAAALHYYNPEDSESSELNLSIEEHGISSTIEKYLHLHEGDTLTQLILDQYHLIREEEKERVS.

Residue 3–14 (AVHFGAGNIGRG) participates in NAD(+) binding.

The protein belongs to the mannitol dehydrogenase family.

It catalyses the reaction D-mannitol 1-phosphate + NAD(+) = beta-D-fructose 6-phosphate + NADH + H(+). The sequence is that of Mannitol-1-phosphate 5-dehydrogenase from Exiguobacterium sp. (strain ATCC BAA-1283 / AT1b).